The primary structure comprises 471 residues: tRNA-2-methylthio-N(6)-dimethylallyladenosine synthase (471 aa).

An MTTase N-terminal domain is found at 33-151 (KKYMITTYGC…FPELLSRSME (119 aa)). 6 residues coordinate [4Fe-4S] cluster: Cys-42, Cys-78, Cys-112, Cys-188, Cys-192, and Cys-195. The Radical SAM core domain maps to 174–404 (RKYDLKGFIN…LDKVNEISAE (231 aa)). The TRAM domain maps to 407 to 470 (QSYLNKVVEV…TFSLNGEVIQ (64 aa)).

Belongs to the methylthiotransferase family. MiaB subfamily. As to quaternary structure, monomer. Requires [4Fe-4S] cluster as cofactor.

The protein localises to the cytoplasm. It catalyses the reaction N(6)-dimethylallyladenosine(37) in tRNA + (sulfur carrier)-SH + AH2 + 2 S-adenosyl-L-methionine = 2-methylsulfanyl-N(6)-dimethylallyladenosine(37) in tRNA + (sulfur carrier)-H + 5'-deoxyadenosine + L-methionine + A + S-adenosyl-L-homocysteine + 2 H(+). Functionally, catalyzes the methylthiolation of N6-(dimethylallyl)adenosine (i(6)A), leading to the formation of 2-methylthio-N6-(dimethylallyl)adenosine (ms(2)i(6)A) at position 37 in tRNAs that read codons beginning with uridine. The polypeptide is tRNA-2-methylthio-N(6)-dimethylallyladenosine synthase (Alkaliphilus oremlandii (strain OhILAs) (Clostridium oremlandii (strain OhILAs))).